The chain runs to 217 residues: MDPVVLSYMDSLLRQSDVSLLDPPNWLNDHIIGFAFEYFASSQFHDCSDHVCFISPEVTQFIKCTSSPAEIAMFLEPLDLPHKRVVFLAINDNSNQAAGGTHWSLLVYLQDKNSFFHYDSHSRSNSIHAKQVAEKLKAFLGSKGDKLVFVEEKAPAQQNSYDCGMYVICNTEALCQNLFRRQPESPLQLLTPTYITKKRGEWKDLIARLAKKNRSSY.

Met-1 bears the N-acetylmethionine mark. A protease region spans residues 11 to 174; sequence SLLRQSDVSL…MYVICNTEAL (164 aa). Catalysis depends on residues His-102 and Asp-119. The active-site Nucleophile is Cys-163.

The protein belongs to the peptidase C48 family.

Its function is as follows. Protease that catalyzes two essential functions in the NEDD8 pathway: processing of full-length NEDD8 to its mature form and deconjugation of NEDD8 from targeted proteins such as cullins or p53. This Rattus norvegicus (Rat) protein is Sentrin-specific protease 8 (Senp8).